The following is a 300-amino-acid chain: Glycine betaine/carnitine transport binding protein GbuC (300 aa).

Positions 1-20 (MLKKLITTAVLAMLIFTLAA) are cleaved as a signal peptide. The N-palmitoyl cysteine moiety is linked to residue cysteine 21. A lipid anchor (S-diacylglycerol cysteine) is attached at cysteine 21.

In terms of assembly, the complex is composed of two ATP-binding proteins (GbuA), two transmembrane proteins (GbuB) and a solute-binding protein (GbuC).

It is found in the cell membrane. With respect to regulation, the complex is activated by an osmotic gradient or by low temperature. Functionally, part of the ABC transporter complex GbuABC involved in glycine betaine uptake. Involved, with BetL and OpuC, in osmoprotection and cryoprotection of Listeria. Can also uptake carnitine when carnitine is abundant in the growth medium. The protein is Glycine betaine/carnitine transport binding protein GbuC (gbuC) of Listeria monocytogenes serotype 1/2a (strain 10403S).